Consider the following 357-residue polypeptide: UDP-N-acetylglucosamine--N-acetylmuramyl-(pentapeptide) pyrophosphoryl-undecaprenol N-acetylglucosamine transferase (357 aa).

UDP-N-acetyl-alpha-D-glucosamine contacts are provided by residues 13-15, N125, R161, S189, I243, and Q288; that span reads TGG.

Belongs to the glycosyltransferase 28 family. MurG subfamily.

It is found in the cell inner membrane. It carries out the reaction di-trans,octa-cis-undecaprenyl diphospho-N-acetyl-alpha-D-muramoyl-L-alanyl-D-glutamyl-meso-2,6-diaminopimeloyl-D-alanyl-D-alanine + UDP-N-acetyl-alpha-D-glucosamine = di-trans,octa-cis-undecaprenyl diphospho-[N-acetyl-alpha-D-glucosaminyl-(1-&gt;4)]-N-acetyl-alpha-D-muramoyl-L-alanyl-D-glutamyl-meso-2,6-diaminopimeloyl-D-alanyl-D-alanine + UDP + H(+). Its pathway is cell wall biogenesis; peptidoglycan biosynthesis. Functionally, cell wall formation. Catalyzes the transfer of a GlcNAc subunit on undecaprenyl-pyrophosphoryl-MurNAc-pentapeptide (lipid intermediate I) to form undecaprenyl-pyrophosphoryl-MurNAc-(pentapeptide)GlcNAc (lipid intermediate II). This Bordetella parapertussis (strain 12822 / ATCC BAA-587 / NCTC 13253) protein is UDP-N-acetylglucosamine--N-acetylmuramyl-(pentapeptide) pyrophosphoryl-undecaprenol N-acetylglucosamine transferase.